A 405-amino-acid polypeptide reads, in one-letter code: SPbeta prophage-derived uncharacterized protein YomR (405 aa).

Residues 9-36 (QLKQNNIQINSLRGSNDRAEKHMLEHEQ) are a coiled coil.

The chain is SPbeta prophage-derived uncharacterized protein YomR (yomR) from Bacillus subtilis (strain 168).